The following is a 404-amino-acid chain: Exodeoxyribonuclease 7 large subunit (404 aa).

Belongs to the XseA family. In terms of assembly, heterooligomer composed of large and small subunits.

Its subcellular location is the cytoplasm. It catalyses the reaction Exonucleolytic cleavage in either 5'- to 3'- or 3'- to 5'-direction to yield nucleoside 5'-phosphates.. Functionally, bidirectionally degrades single-stranded DNA into large acid-insoluble oligonucleotides, which are then degraded further into small acid-soluble oligonucleotides. The polypeptide is Exodeoxyribonuclease 7 large subunit (Caldanaerobacter subterraneus subsp. tengcongensis (strain DSM 15242 / JCM 11007 / NBRC 100824 / MB4) (Thermoanaerobacter tengcongensis)).